The sequence spans 429 residues: 28S rRNA (cytosine-C(5))-methyltransferase (429 aa).

N-acetylglycine is present on Gly-2. At Ser-167 the chain carries Phosphoserine. S-adenosyl-L-methionine contacts are provided by residues 234–240 (CAAPGNK), Asp-258, Arg-263, and Asp-305. Catalysis depends on Cys-359, which acts as the Nucleophile.

Belongs to the class I-like SAM-binding methyltransferase superfamily. RsmB/NOP family. Ubiquitous. Detected in placenta, heart and skeletal muscle.

It localises to the nucleus. The protein localises to the nucleolus. It carries out the reaction cytidine(3782) in 28S rRNA + S-adenosyl-L-methionine = 5-methylcytidine(3782) in 28S rRNA + S-adenosyl-L-homocysteine + H(+). Its function is as follows. S-adenosyl-L-methionine-dependent methyltransferase that specifically methylates the C(5) position of cytosine 3782 (m5C3782) in 28S rRNA. m5C3782 promotes protein translation without affecting ribosome biogenesis and fidelity. Required for corpus callosum and cerebral cortex development. The protein is 28S rRNA (cytosine-C(5))-methyltransferase of Homo sapiens (Human).